The chain runs to 387 residues: Large ribosomal subunit protein uL3 (387 aa).

This sequence belongs to the universal ribosomal protein uL3 family.

Its subcellular location is the cytoplasm. This is Large ribosomal subunit protein uL3 (RPL3) from Eremothecium gossypii (strain ATCC 10895 / CBS 109.51 / FGSC 9923 / NRRL Y-1056) (Yeast).